The following is a 670-amino-acid chain: Zinc finger protein 526 (670 aa).

3 consecutive C2H2-type zinc fingers follow at residues 57 to 79, 108 to 130, and 140 to 163; these read FMCSECGSLYNTLEEVLSHQEQH, FQCGECSQLILSPGELLAHQDAH, and YQCWDCQELFPSPELWVAHRKAQH. 2 disordered regions span residues 168–196 and 217–304; these read VAEPPVPPPLPPPTPLPPPSPPSEVKMEP and GTHF…ATHP. Residues 171–189 are compositionally biased toward pro residues; sequence PPVPPPLPPPTPLPPPSPP. The C2H2-type 4 zinc-finger motif lies at 197 to 219; sequence YECPECSTLCATPEEFLEHQGTH. Basic and acidic residues predominate over residues 217–231; the sequence is GTHFDSLEKEERNGL. Positions 232–263 are enriched in acidic residues; that stretch reads EEEEEDDEEDEEDDEEMEDEEAMAEVGDDAVG. 9 consecutive C2H2-type zinc fingers follow at residues 305-327, 332-354, 360-382, 388-409, 442-465, 472-494, 500-522, 528-550, and 573-595; these read FHCSQCQRSFSSANRLQAHGRAH, HECTTCSKVFKKAASLEQHLRLH, YLCVDCGRGFGTELTLVAHRRAH, HRCRCGKTFSNMTKFLYHRRTH, LPCPQCSKSFASASRLSRHRRAVH, HRCGVCGKGFKKLIHVRNHLRTH, FQCHSCGKTFASLANLSRHQLTH, YQCLDCGKRFTQSSNLQQHRRLH, and YYCGTCGRWFRAMAGLRLHQRVH. A disordered region spans residues 409–443; sequence HAGKSGAPPTGATAPPAPAEPTPPPPPPAPPAQLP. The span at 423–442 shows a compositional bias: pro residues; that stretch reads PPAPAEPTPPPPPPAPPAQL. Positions 601 to 621 are disordered; sequence LTLQPPRSPSPAPPPPPEPQQ. Over residues 606–619 the composition is skewed to pro residues; the sequence is PRSPSPAPPPPPEP.

Belongs to the krueppel C2H2-type zinc-finger protein family. As to expression, widely expressed.

It localises to the nucleus. May be involved in transcriptional regulation. The sequence is that of Zinc finger protein 526 (ZNF526) from Homo sapiens (Human).